The primary structure comprises 100 residues: Small ribosomal subunit protein uS14 (100 aa).

It belongs to the universal ribosomal protein uS14 family. In terms of assembly, part of the 30S ribosomal subunit. Contacts proteins S3 and S10.

Its function is as follows. Binds 16S rRNA, required for the assembly of 30S particles and may also be responsible for determining the conformation of the 16S rRNA at the A site. The sequence is that of Small ribosomal subunit protein uS14 from Synechococcus sp. (strain RCC307).